The chain runs to 473 residues: Ribulose bisphosphate carboxylase large chain (473 aa).

Positions 1-2 (MS) are excised as a propeptide. Proline 3 bears the N-acetylproline mark. N6,N6,N6-trimethyllysine is present on lysine 14. Positions 123 and 173 each coordinate substrate. Catalysis depends on lysine 175, which acts as the Proton acceptor. Lysine 177 contacts substrate. Residues lysine 201, aspartate 203, and glutamate 204 each coordinate Mg(2+). Lysine 201 carries the N6-carboxylysine modification. Catalysis depends on histidine 294, which acts as the Proton acceptor. Positions 295, 327, and 379 each coordinate substrate.

It belongs to the RuBisCO large chain family. Type I subfamily. In terms of assembly, heterohexadecamer of 8 large chains and 8 small chains; disulfide-linked. The disulfide link is formed within the large subunit homodimers. The cofactor is Mg(2+). The disulfide bond which can form in the large chain dimeric partners within the hexadecamer appears to be associated with oxidative stress and protein turnover.

Its subcellular location is the plastid. It localises to the chloroplast. It carries out the reaction 2 (2R)-3-phosphoglycerate + 2 H(+) = D-ribulose 1,5-bisphosphate + CO2 + H2O. It catalyses the reaction D-ribulose 1,5-bisphosphate + O2 = 2-phosphoglycolate + (2R)-3-phosphoglycerate + 2 H(+). RuBisCO catalyzes two reactions: the carboxylation of D-ribulose 1,5-bisphosphate, the primary event in carbon dioxide fixation, as well as the oxidative fragmentation of the pentose substrate in the photorespiration process. Both reactions occur simultaneously and in competition at the same active site. This chain is Ribulose bisphosphate carboxylase large chain, found in Ajuga chamaepitys (Yellow bugle).